The chain runs to 419 residues: Mitochondrial chaperone BCS1 (419 aa).

Residues 1–15 (MPLSDFVLALKDNPY) are Mitochondrial intermembrane-facing. A helical transmembrane segment spans residues 16–32 (FGAGFGLVGVGTALALA). The Mitochondrial matrix segment spans residues 33–419 (RKGAQLGLVA…AIQNAESLRR (387 aa)). Tyrosine 181 bears the Phosphotyrosine mark. 230-237 (GPPGCGKS) lines the ATP pocket.

It belongs to the AAA ATPase family. BCS1 subfamily. As to quaternary structure, interacts with LETM1.

Its subcellular location is the mitochondrion inner membrane. The catalysed reaction is ATP + H2O = ADP + phosphate + H(+). Its function is as follows. Chaperone necessary for the incorporation of Rieske iron-sulfur protein UQCRFS1 into the mitochondrial respiratory chain complex III. Plays an important role in the maintenance of mitochondrial tubular networks, respiratory chain assembly and formation of the LETM1 complex. This Bos taurus (Bovine) protein is Mitochondrial chaperone BCS1 (BCS1L).